The sequence spans 285 residues: Probable endonuclease 4 (285 aa).

Residues His69, His109, Glu145, Asp179, His182, His216, Asp229, His231, and Glu261 each coordinate Zn(2+).

It belongs to the AP endonuclease 2 family. Zn(2+) is required as a cofactor.

It carries out the reaction Endonucleolytic cleavage to 5'-phosphooligonucleotide end-products.. Endonuclease IV plays a role in DNA repair. It cleaves phosphodiester bonds at apurinic or apyrimidinic (AP) sites, generating a 3'-hydroxyl group and a 5'-terminal sugar phosphate. The chain is Probable endonuclease 4 from Escherichia coli O81 (strain ED1a).